The following is a 1507-amino-acid chain: DNA-directed RNA polymerase subunit beta' (1507 aa).

The Zn(2+) site is built by Cys71, Cys73, Cys86, and Cys89. Mg(2+)-binding residues include Asp470, Asp472, and Asp474. The Zn(2+) site is built by Cys800, Cys874, Cys881, and Cys884.

It belongs to the RNA polymerase beta' chain family. As to quaternary structure, the RNAP catalytic core consists of 2 alpha, 1 beta, 1 beta' and 1 omega subunit. When a sigma factor is associated with the core the holoenzyme is formed, which can initiate transcription. Requires Mg(2+) as cofactor. Zn(2+) serves as cofactor.

It carries out the reaction RNA(n) + a ribonucleoside 5'-triphosphate = RNA(n+1) + diphosphate. Its function is as follows. DNA-dependent RNA polymerase catalyzes the transcription of DNA into RNA using the four ribonucleoside triphosphates as substrates. The protein is DNA-directed RNA polymerase subunit beta' of Nitratiruptor sp. (strain SB155-2).